Reading from the N-terminus, the 177-residue chain is Acetyltransferase (177 aa).

The N-acetyltransferase domain maps to 4–174; that stretch reads AQLRRVTAES…PTAIYFKTLG (171 aa). Residues glutamate 27, 96 to 98, 104 to 109, 130 to 131, and tyrosine 141 contribute to the acetyl-CoA site; these read LMV, GRGLGR, and DT.

Functionally, renders tabtoxin-producing pathogens tolerant to their own phytotoxins. This is Acetyltransferase (ttr) from Pseudomonas amygdali pv. tabaci (Pseudomonas syringae pv. tabaci).